Here is a 430-residue protein sequence, read N- to C-terminus: MANVVVVGAQWGDEGKGKIVDWLAEQADVVVRFQGGHNAGHTLVIDGVTYKLSLLPSGVVRGGTLSVIGNGVVVDPWHLVDEIARIGTQGVSITPETLRIADNATLILPLHRELDHFRETANATLKIGTTKRGIGPAYEDKVGRRAIRVVDLADEALLGAKIERLLAHHNALRRGLGIEEVDGAALKAELLAIAPKILPYADTVWVLLDEARRGGQRILFEGAQGALLDVDHGTYPYVTSSNIVAAQAATGSGLGPSAIGYVLGIVKAYTTRVGEGPFPTELTDAIGEKIGERGREFGVVTGRKRRCGWFDAALVRQTVRTSGIDGIALTKLDILDGFETIKICTGYRLDGRLIDHLPASQADQARVEPVYETIDGWFETTAGARSWAELPAQAIKYVRRIEELIGATVALLSTSPERDDTILVHNPFED.

GTP contacts are provided by residues 12–18 (GDEGKGK) and 40–42 (GHT). Asp13 serves as the catalytic Proton acceptor. Mg(2+)-binding residues include Asp13 and Gly40. IMP-binding positions include 13–16 (DEGK), 38–41 (NAGH), Thr130, Arg144, Gln224, Thr239, and Arg303. His41 acts as the Proton donor in catalysis. 299-305 (VVTGRKR) is a binding site for substrate. Residues Arg305, 331 to 333 (KLD), and 413 to 415 (STS) contribute to the GTP site.

This sequence belongs to the adenylosuccinate synthetase family. As to quaternary structure, homodimer. Mg(2+) is required as a cofactor.

The protein localises to the cytoplasm. It carries out the reaction IMP + L-aspartate + GTP = N(6)-(1,2-dicarboxyethyl)-AMP + GDP + phosphate + 2 H(+). Its pathway is purine metabolism; AMP biosynthesis via de novo pathway; AMP from IMP: step 1/2. Its function is as follows. Plays an important role in the de novo pathway of purine nucleotide biosynthesis. Catalyzes the first committed step in the biosynthesis of AMP from IMP. The sequence is that of Adenylosuccinate synthetase from Methylobacterium sp. (strain 4-46).